A 412-amino-acid polypeptide reads, in one-letter code: MQLGFAMLADPILLITILLGFAMAWAIGANDAANSMSTAVGAGAITPRQAVIIAGVLEFMGAYFFGKTVTETIRKGIIDPSKITDPNVLIFGSIAALIGATIWLVIATKYGLPVSTTHSIIGGIVGYGIVYGGMSIVNWDKMIKVVLSWILSPIVGAIFAYLVFRALSKTVLQSKDPVKSAKRWSPFWIGLAFVVIGTMFYIKVLHGNSLLEGFLKYGMPAGILTFIVVSLILEKRFPATDPYLGAERVFRRVQVITSAYVALAHGANDVANAIGPVAAVYTVAMFGLAGAKVPVPRWILALGGLGIAIGVATYGYKVMETVGKKITELTNTRGFTIDFSAATVVLIASWLGMPISTTHTVVGAVIGVGLARGIKAINKDIVKDIIISWFVTVPAAGVIAGIIFKALMMLMG.

10 consecutive transmembrane segments (helical) span residues 7-27, 50-70, 88-108, 119-139, 143-163, 187-207, 213-233, 298-318, 335-355, and 384-404; these read MLADPILLITILLGFAMAWAI, AVIIAGVLEFMGAYFFGKTVT, VLIFGSIAALIGATIWLVIAT, SIIGGIVGYGIVYGGMSIVNW, IKVVLSWILSPIVGAIFAYLV, FWIGLAFVVIGTMFYIKVLHG, GFLKYGMPAGILTFIVVSLIL, WILALGGLGIAIGVATYGYKV, FTIDFSAATVVLIASWLGMPI, and DIIISWFVTVPAAGVIAGIIF.

This sequence belongs to the inorganic phosphate transporter (PiT) (TC 2.A.20) family.

It localises to the cell membrane. Functionally, potential transporter for phosphate. The chain is Putative phosphate permease PF1020 from Pyrococcus furiosus (strain ATCC 43587 / DSM 3638 / JCM 8422 / Vc1).